Here is a 374-residue protein sequence, read N- to C-terminus: Methylthioribose-1-phosphate isomerase (374 aa).

The active-site Proton donor is the Asp-251.

Belongs to the eIF-2B alpha/beta/delta subunits family. MtnA subfamily.

It localises to the cytoplasm. It is found in the nucleus. It carries out the reaction 5-(methylsulfanyl)-alpha-D-ribose 1-phosphate = 5-(methylsulfanyl)-D-ribulose 1-phosphate. It participates in amino-acid biosynthesis; L-methionine biosynthesis via salvage pathway; L-methionine from S-methyl-5-thio-alpha-D-ribose 1-phosphate: step 1/6. Catalyzes the interconversion of methylthioribose-1-phosphate (MTR-1-P) into methylthioribulose-1-phosphate (MTRu-1-P). This chain is Methylthioribose-1-phosphate isomerase, found in Oryza sativa subsp. indica (Rice).